The sequence spans 609 residues: Glutamine--fructose-6-phosphate aminotransferase [isomerizing] (609 aa).

Residue Cys-2 is the Nucleophile; for GATase activity of the active site. A Glutamine amidotransferase type-2 domain is found at 2-217 (CGIVGYIGRR…EGWLAELTPE (216 aa)). SIS domains follow at residues 286–425 (SAAE…QNGR) and 458–599 (AAEA…VDKP). Residue Lys-604 is the For Fru-6P isomerization activity of the active site.

In terms of assembly, homodimer.

The protein localises to the cytoplasm. The enzyme catalyses D-fructose 6-phosphate + L-glutamine = D-glucosamine 6-phosphate + L-glutamate. Functionally, catalyzes the first step in hexosamine metabolism, converting fructose-6P into glucosamine-6P using glutamine as a nitrogen source. This is Glutamine--fructose-6-phosphate aminotransferase [isomerizing] from Symbiobacterium thermophilum (strain DSM 24528 / JCM 14929 / IAM 14863 / T).